The chain runs to 88 residues: Small ribosomal subunit protein bS16c (88 aa).

The protein belongs to the bacterial ribosomal protein bS16 family.

The protein localises to the plastid. It localises to the chloroplast. In Sinapis alba (White mustard), this protein is Small ribosomal subunit protein bS16c.